A 316-amino-acid polypeptide reads, in one-letter code: Meiotically up-regulated gene 154 protein (316 aa).

The next 4 helical transmembrane spans lie at 41 to 61 (YSIPFSLAVNFIFLLMRIYIK), 88 to 108 (AFLSFLSICFLFISFLNFIFS), 159 to 179 (FLLNFACLFSPAHALILWFYS), and 186 to 206 (LLTFLLSFTTLHFVNKFSLLL). A disordered region spans residues 291–316 (HDSGISRDSSSPFKRFPHLSDGSSRF).

The protein resides in the endoplasmic reticulum membrane. Has a role in meiosis. The sequence is that of Meiotically up-regulated gene 154 protein (mug154) from Schizosaccharomyces pombe (strain 972 / ATCC 24843) (Fission yeast).